A 450-amino-acid chain; its full sequence is Cytochrome c1 (450 aa).

Residues methionine 1 to glycine 21 form the signal peptide. A compositionally biased stretch (low complexity) spans alanine 24–glutamate 58. The segment at alanine 24–histidine 210 is disordered. 3 stretches are compositionally biased toward acidic residues: residues alanine 59–glutamate 77, proline 85–alanine 108, and alanine 118–alanine 194. Heme c contacts are provided by cysteine 245, cysteine 248, and histidine 249. The interval proline 284–glycine 305 is disordered. Methionine 373 contributes to the heme c binding site. A helical membrane pass occupies residues serine 421–threonine 435.

The main subunits of complex b-c1 are: cytochrome b, cytochrome c1 and the Rieske protein. In terms of processing, binds 1 heme c group covalently per subunit.

The protein localises to the cell membrane. In terms of biological role, component of the ubiquinol-cytochrome c reductase complex (complex III or cytochrome b-c1 complex), which is a respiratory chain that generates an electrochemical potential coupled to ATP synthesis. c1 functions as an electron donor to cytochrome c. The protein is Cytochrome c1 (petC) of Paracoccus denitrificans.